The following is a 143-amino-acid chain: Interleukin-4 (143 aa).

An N-terminal signal peptide occupies residues 1–19 (MGLSPQLAAVLLCLLVCTG). 2 disulfides stabilise this stretch: cysteine 48/cysteine 88 and cysteine 70/cysteine 115. 2 N-linked (GlcNAc...) asparagine glycosylation sites follow: asparagine 62 and asparagine 91.

Belongs to the IL-4/IL-13 family.

The protein resides in the secreted. In terms of biological role, participates in at least several B-cell activation processes as well as of other cell types. It is a costimulator of DNA-synthesis. It induces the expression of class II MHC molecules on resting B-cells. It enhances both secretion and cell surface expression of IgE and IgG1. It also regulates the expression of the low affinity Fc receptor for IgE (CD23) on both lymphocytes and monocytes. Positively regulates IL31RA expression in macrophages. Stimulates autophagy in dendritic cells by interfering with mTORC1 signaling and through the induction of RUFY4. In Meriones unguiculatus (Mongolian jird), this protein is Interleukin-4 (IL4).